We begin with the raw amino-acid sequence, 423 residues long: Lipoyl synthase 1, mitochondrial (423 aa).

7 residues coordinate [4Fe-4S] cluster: Cys127, Cys132, Cys138, Cys159, Cys163, Cys166, and Ser375. One can recognise a Radical SAM core domain in the interval 142–364; that stretch reads DEEEGTATAT…EEEAMAMGFL (223 aa).

It belongs to the radical SAM superfamily. Lipoyl synthase family. [4Fe-4S] cluster is required as a cofactor.

Its subcellular location is the mitochondrion. The catalysed reaction is [[Fe-S] cluster scaffold protein carrying a second [4Fe-4S](2+) cluster] + N(6)-octanoyl-L-lysyl-[protein] + 2 oxidized [2Fe-2S]-[ferredoxin] + 2 S-adenosyl-L-methionine + 4 H(+) = [[Fe-S] cluster scaffold protein] + N(6)-[(R)-dihydrolipoyl]-L-lysyl-[protein] + 4 Fe(3+) + 2 hydrogen sulfide + 2 5'-deoxyadenosine + 2 L-methionine + 2 reduced [2Fe-2S]-[ferredoxin]. The protein operates within protein modification; protein lipoylation via endogenous pathway; protein N(6)-(lipoyl)lysine from octanoyl-[acyl-carrier-protein]: step 2/2. Its function is as follows. Catalyzes the radical-mediated insertion of two sulfur atoms into the C-6 and C-8 positions of the octanoyl moiety bound to the lipoyl domains of lipoate-dependent enzymes, thereby converting the octanoylated domains into lipoylated derivatives. The chain is Lipoyl synthase 1, mitochondrial from Trypanosoma cruzi (strain CL Brener).